Consider the following 425-residue polypeptide: Decarboxylase flvG (425 aa).

Lysine 82 bears the N6-(pyridoxal phosphate)lysine mark. Pyridoxal 5'-phosphate contacts are provided by residues serine 213, glycine 250, and glutamate 281 to arginine 284. Phenylalanine 331–glutamate 332 serves as a coordination point for substrate. Cysteine 365 acts as the Proton donor; shared with dimeric partner in catalysis. A substrate-binding site is contributed by aspartate 366. Tyrosine 395 is a binding site for pyridoxal 5'-phosphate.

It belongs to the Orn/Lys/Arg decarboxylase class-II family. In terms of assembly, homodimer. Only the dimer is catalytically active, as the active sites are constructed of residues from both monomers. Requires pyridoxal 5'-phosphate as cofactor.

The protein localises to the cytoplasm. The enzyme catalyses N(6),N(6)-dimethyl-L-lysine + H(+) = N,N-dimethyl-cadaverine + CO2. It participates in secondary metabolite biosynthesis; terpenoid biosynthesis. In terms of biological role, decarboxylase; part of the gene cluster that mediates the biosynthesis of flavunoidine, an alkaloidal terpenoid with a tetracyclic cage-like core connected to dimethylcadaverine via a C-N bond and acylated with 5,5-dimethyl-L-pipecolate. The tetracyclic core is synthesized by the terpene cyclase flvE and the cytochrome P450 monooxygenase flvD. The terpene cyclase flvE catalyzes the cyclization of farnesyl pyrophosphate (FPP) to form (1R,4R,5S)-(+)-acoradiene and the cytochrome P450 monooxygenase flvD is then responsible for oxidative conversion of (1R,4R,5S)-(+)-acoradiene into the tetracyclic cage present in the final product flavunoidine. In parallel, the N-methyltransferase flvH dimethylates L-lysine to give N,N-dimethyl-L-Lysin which is decarboxylated by flvG to afford dimethylcadaverine. The terpene cyclase-like protein flvF is the enzyme that attaches the dimethylcadaverine precusor at the C-7 of the tetracyclic cage to yield pre-flavunoidine. The cytochrome monooxygenase flvC hydroxylates the C-10 position of pre-flavunoidine whereas the NRPS flvI acylates the terpenoid core at the hydroxylated C-10 with dimethylpipecolate to yield final flavunoidine. The bifunctional enzyme flvA and the dehydrogenase flvB are responsible for the synthesis of the dimethylpipecolate precursor. The PLP-dependent lyase domain of flvA might use L-O-acetyl-homoserine and alpha-keto-isovalerate to form an intermediary ketone that can cyclize intramolecularly to yield an imine. The imine can be reduced by flvB to yield the 6-carboxylated pipecolate. The C-terminal alpha-KG-dependent oxygenase domain of flvA is then proposed to catalyze the decarboxylation to yield dimethylpipecolate. This Aspergillus flavus (strain ATCC 200026 / FGSC A1120 / IAM 13836 / NRRL 3357 / JCM 12722 / SRRC 167) protein is Decarboxylase flvG.